A 170-amino-acid chain; its full sequence is Peptide deformylase (170 aa).

Fe cation-binding residues include Cys94 and His136. Residue Glu137 is part of the active site. Residue His140 coordinates Fe cation.

Belongs to the polypeptide deformylase family. It depends on Fe(2+) as a cofactor.

It carries out the reaction N-terminal N-formyl-L-methionyl-[peptide] + H2O = N-terminal L-methionyl-[peptide] + formate. Removes the formyl group from the N-terminal Met of newly synthesized proteins. Requires at least a dipeptide for an efficient rate of reaction. N-terminal L-methionine is a prerequisite for activity but the enzyme has broad specificity at other positions. The protein is Peptide deformylase of Stenotrophomonas maltophilia (strain K279a).